The following is a 305-amino-acid chain: uncharacterized protein (305 aa).

In terms of domain architecture, ABC transporter spans 5 to 233 (LELKNVTKNI…ENDTYFFQVE (229 aa)). An ATP-binding site is contributed by 37 to 44 (GPNGAGKT).

The protein belongs to the ABC transporter superfamily.

This is an uncharacterized protein from Bacillus subtilis (strain 168).